The chain runs to 425 residues: Serine--tRNA ligase (425 aa).

233–235 lines the L-serine pocket; sequence TAE. ATP is bound at residue 264–266; the sequence is RRE. An L-serine-binding site is contributed by Glu-287. Residue 351 to 354 participates in ATP binding; sequence EISS. Ser-387 is a binding site for L-serine.

Belongs to the class-II aminoacyl-tRNA synthetase family. Type-1 seryl-tRNA synthetase subfamily. As to quaternary structure, homodimer. The tRNA molecule binds across the dimer.

The protein resides in the cytoplasm. The catalysed reaction is tRNA(Ser) + L-serine + ATP = L-seryl-tRNA(Ser) + AMP + diphosphate + H(+). It carries out the reaction tRNA(Sec) + L-serine + ATP = L-seryl-tRNA(Sec) + AMP + diphosphate + H(+). Its pathway is aminoacyl-tRNA biosynthesis; selenocysteinyl-tRNA(Sec) biosynthesis; L-seryl-tRNA(Sec) from L-serine and tRNA(Sec): step 1/1. In terms of biological role, catalyzes the attachment of serine to tRNA(Ser). Is also able to aminoacylate tRNA(Sec) with serine, to form the misacylated tRNA L-seryl-tRNA(Sec), which will be further converted into selenocysteinyl-tRNA(Sec). This Thermotoga petrophila (strain ATCC BAA-488 / DSM 13995 / JCM 10881 / RKU-1) protein is Serine--tRNA ligase.